A 121-amino-acid chain; its full sequence is Putative iron-sulfur cluster insertion protein ErpA (121 aa).

Positions 49, 113, and 115 each coordinate iron-sulfur cluster.

It belongs to the HesB/IscA family. Homodimer. The cofactor is iron-sulfur cluster.

Required for insertion of 4Fe-4S clusters. The sequence is that of Putative iron-sulfur cluster insertion protein ErpA from Polaromonas sp. (strain JS666 / ATCC BAA-500).